A 240-amino-acid polypeptide reads, in one-letter code: MAFDISVNASKTINALVYFSTQQNKLVIRNEVNDTHYTVEFDRDKVVDTFISYNRHNDTIEIRGVLPEETNIGCAVNTPVSMTYLYNKYSFKLILAEYIRHRNTISGNIYSALMTLDDLAIKQYGDIDLLFNEKLKVDSDSGLFDFVNFVKDMICCDSRIVVALSSLVSKHWELTNKKYRCMALAEHISDSIPISELSRLRYNLCKYLRGHTESIEDKFDYFEDDDSSTCSAVTDRETDV.

Belongs to the orthopoxvirus OPG176 family. As to quaternary structure, tetramer. Interacts with host MYD88, TRF4, TICAM2 and MAL.

Its function is as follows. BCL2-like protein which disrupts the host immune response by inhibiting the TLR4 signaling pathway leading to NF-kappa-B activation. Acts close to the plasma membrane and targets several host TIR-domain containing adapter proteins including MYD88, TIRAP, TRIF and TICAM2. In turn, blocks the host NF-kappa-B and TRIF-mediated IRF3 activation. This Bos taurus (Bovine) protein is Protein OPG176 (OPG176).